Here is a 542-residue protein sequence, read N- to C-terminus: E3 ubiquitin-protein ligase RNF217 (542 aa).

Disordered regions lie at residues 1–140 (MGEE…TRVG) and 176–216 (APAS…TDSL). Residues 37–50 (SARAPPLRAASAEP) show a composition bias toward low complexity. Acidic residues predominate over residues 122-132 (DEQQEAPPGEE). Residues 185–196 (PASPPGAPPVLN) show a composition bias toward pro residues. The segment covering 197–213 (PPSTRSSFPSPRLSLPT) has biased composition (low complexity). Residues 259 to 478 (MVLMCRVCLE…LSIFGCKYRY (220 aa)) form a TRIAD supradomain region. Zn(2+)-binding residues include C263, C266, C283, C286, C383, C386, H391, C396, C423, and C426. The RING-type 1 zinc finger occupies 263–309 (CRVCLEDKPIKPLPCCKKAVCEECLKVYLSAQVQLGQVEIKCPITEC). The IBR-type zinc-finger motif lies at 328-396 (IKYKYFLELG…HSPWHEGVNC (69 aa)). The segment at 423 to 452 (CPKCKIHIQRTEGCDHMTCSQCNTNFCYRC) adopts an RING-type 2; atypical zinc-finger fold. The active site involves C436. Zn(2+) contacts are provided by C441, C444, C449, C452, H465, and C474. Residues 503-523 (LIMVLGLALGAIAVVIGLFVF) traverse the membrane as a helical segment.

This sequence belongs to the RBR family. RNF217 subfamily. Interacts with HAX1. Mainly expressed in testis and skeletal muscle.

It localises to the membrane. The protein localises to the cytoplasm. It carries out the reaction [E2 ubiquitin-conjugating enzyme]-S-ubiquitinyl-L-cysteine + [acceptor protein]-L-lysine = [E2 ubiquitin-conjugating enzyme]-L-cysteine + [acceptor protein]-N(6)-ubiquitinyl-L-lysine.. It functions in the pathway protein modification; protein ubiquitination. Functionally, E3 ubiquitin-protein ligase which accepts ubiquitin from E2 ubiquitin-conjugating enzymes in the form of a thioester and then directly transfers the ubiquitin to targeted substrates. Mediates the degradation of the iron exporter ferroportin/SLC40A1 and thus regulates iron homeostasis. The protein is E3 ubiquitin-protein ligase RNF217 (RNF217) of Homo sapiens (Human).